We begin with the raw amino-acid sequence, 494 residues long: Argininosuccinate lyase (494 aa).

It belongs to the lyase 1 family. Argininosuccinate lyase subfamily.

The protein localises to the cytoplasm. The catalysed reaction is 2-(N(omega)-L-arginino)succinate = fumarate + L-arginine. It functions in the pathway amino-acid biosynthesis; L-arginine biosynthesis; L-arginine from L-ornithine and carbamoyl phosphate: step 3/3. In Methanosphaerula palustris (strain ATCC BAA-1556 / DSM 19958 / E1-9c), this protein is Argininosuccinate lyase.